The sequence spans 209 residues: Ribosomal RNA large subunit methyltransferase E (209 aa).

Gly63, Trp65, Asp83, Asp99, and Asp124 together coordinate S-adenosyl-L-methionine. The active-site Proton acceptor is the Lys164.

This sequence belongs to the class I-like SAM-binding methyltransferase superfamily. RNA methyltransferase RlmE family.

The protein localises to the cytoplasm. It catalyses the reaction uridine(2552) in 23S rRNA + S-adenosyl-L-methionine = 2'-O-methyluridine(2552) in 23S rRNA + S-adenosyl-L-homocysteine + H(+). Specifically methylates the uridine in position 2552 of 23S rRNA at the 2'-O position of the ribose in the fully assembled 50S ribosomal subunit. The polypeptide is Ribosomal RNA large subunit methyltransferase E (Pseudoalteromonas atlantica (strain T6c / ATCC BAA-1087)).